We begin with the raw amino-acid sequence, 216 residues long: Protein GrpE (216 aa).

2 disordered regions span residues 1–45 and 185–216; these read MTEE…LDPT and RVAVAEPQPGATPAAAKEEKTDDEESGGTEEV. The segment covering 205-216 has biased composition (acidic residues); it reads TDDEESGGTEEV.

This sequence belongs to the GrpE family. Homodimer.

The protein resides in the cytoplasm. Its function is as follows. Participates actively in the response to hyperosmotic and heat shock by preventing the aggregation of stress-denatured proteins, in association with DnaK and GrpE. It is the nucleotide exchange factor for DnaK and may function as a thermosensor. Unfolded proteins bind initially to DnaJ; upon interaction with the DnaJ-bound protein, DnaK hydrolyzes its bound ATP, resulting in the formation of a stable complex. GrpE releases ADP from DnaK; ATP binding to DnaK triggers the release of the substrate protein, thus completing the reaction cycle. Several rounds of ATP-dependent interactions between DnaJ, DnaK and GrpE are required for fully efficient folding. The sequence is that of Protein GrpE from Streptomyces griseus subsp. griseus (strain JCM 4626 / CBS 651.72 / NBRC 13350 / KCC S-0626 / ISP 5235).